Here is a 1104-residue protein sequence, read N- to C-terminus: Valine--tRNA ligase, mitochondrial (1104 aa).

A mitochondrion-targeting transit peptide spans 1 to 47 (MNKWLNTLSKTFTFRLLNCHYRRSLPLCQNFSLKKSLTHNQVRFFKM). S73 bears the Phosphoserine mark. The disordered stretch occupies residues 99 to 119 (KKNAAATTGASQKKPKKKKEV). Residues 190 to 200 (PNVTGALHIGH) carry the 'HIGH' region motif. Phosphoserine is present on residues S294 and S332. Positions 703–707 (KMSKS) match the 'KMSKS' region motif. K706 is a binding site for ATP. The residue at position 707 (S707) is a Phosphoserine. Phosphothreonine is present on T1003.

It belongs to the class-I aminoacyl-tRNA synthetase family.

The protein resides in the cytoplasm. It is found in the mitochondrion. The enzyme catalyses tRNA(Val) + L-valine + ATP = L-valyl-tRNA(Val) + AMP + diphosphate. This is Valine--tRNA ligase, mitochondrial (VAS1) from Saccharomyces cerevisiae (strain ATCC 204508 / S288c) (Baker's yeast).